The sequence spans 682 residues: MPLLSQMQDQSGTTFAQLEALRQKLREYEYYYHVLDNPLVPDAEYDRLMNELKNLEWQHPEWITADSPTQRVGAKPLDGFAQVTHEIPMLSLDNAFSDEELDGFLRRMESYITEDPHTLAFCCEPKLDGLAVSILYVDGVLSQAATRGDGTTGEDITSNIRTVRNIPLKLNMDNPPARLEVRGEVFMPQKGFETLNERALEKGEKTFANPRNAAAGSLRQLDPKITRQRPLVLNAYGIGVYESDDELPATHFERLQWLKSIGIPVNNEIRLATGREQLLAFYADIQAKRPTLGYDIDGTVLKVNDIGLQEQLGFISRSPRWAIAYKFPAQEEMTVLNDVEFQVGRTGAITPVAKLEPVFVAGVTVSNATLHNGDEIERLGIVIGDTVIIRRAGDVIPQIVGVVMERRPENAKKIEFPTACPVCESAVVRVEGEAVARCTGGLFCGAQRKEALKHFVSRKAMDIDGVGEKLIEQLMERELVHTPADLFKLEHTTLMRLERMGGKSAQNALNSIEKAKNTTLARFLFALGIRDVGEATAQNLANHFHNLDAIRAATFEQLQEVQDVGEVVANRIVRFWQEPHNVTVVEDLISQGIHWQDVVQVEIADNPLKGKSVVLTGTLTQLTRDQAKALLQSFGCKVSGSVSSKTDYLIAGEKAGSKLAKAQELGVKVLTEQEFIALTGEN.

Residues 42–46 (DAEYD), 91–92 (SL), and glutamate 124 contribute to the NAD(+) site. The active-site N6-AMP-lysine intermediate is the lysine 126. Residues arginine 147, glutamate 184, lysine 302, and lysine 326 each coordinate NAD(+). Zn(2+)-binding residues include cysteine 420, cysteine 423, cysteine 438, and cysteine 444. The BRCT domain occupies 603–682 (IADNPLKGKS…QEFIALTGEN (80 aa)).

The protein belongs to the NAD-dependent DNA ligase family. LigA subfamily. It depends on Mg(2+) as a cofactor. The cofactor is Mn(2+).

The enzyme catalyses NAD(+) + (deoxyribonucleotide)n-3'-hydroxyl + 5'-phospho-(deoxyribonucleotide)m = (deoxyribonucleotide)n+m + AMP + beta-nicotinamide D-nucleotide.. Its function is as follows. DNA ligase that catalyzes the formation of phosphodiester linkages between 5'-phosphoryl and 3'-hydroxyl groups in double-stranded DNA using NAD as a coenzyme and as the energy source for the reaction. It is essential for DNA replication and repair of damaged DNA. In Actinobacillus pleuropneumoniae serotype 3 (strain JL03), this protein is DNA ligase.